Reading from the N-terminus, the 302-residue chain is UDP-3-O-acyl-N-acetylglucosamine deacetylase (302 aa).

3 residues coordinate Zn(2+): His-78, His-237, and Asp-241. The active-site Proton donor is His-264.

It belongs to the LpxC family. The cofactor is Zn(2+).

The enzyme catalyses a UDP-3-O-[(3R)-3-hydroxyacyl]-N-acetyl-alpha-D-glucosamine + H2O = a UDP-3-O-[(3R)-3-hydroxyacyl]-alpha-D-glucosamine + acetate. It participates in glycolipid biosynthesis; lipid IV(A) biosynthesis; lipid IV(A) from (3R)-3-hydroxytetradecanoyl-[acyl-carrier-protein] and UDP-N-acetyl-alpha-D-glucosamine: step 2/6. Its function is as follows. Catalyzes the hydrolysis of UDP-3-O-myristoyl-N-acetylglucosamine to form UDP-3-O-myristoylglucosamine and acetate, the committed step in lipid A biosynthesis. The protein is UDP-3-O-acyl-N-acetylglucosamine deacetylase of Hahella chejuensis (strain KCTC 2396).